We begin with the raw amino-acid sequence, 833 residues long: MTFYDHTAIEPKWQAFWADNHTFKTGTDASKPKFYALDMFPYPSGAGLHVGHPEGYTATDILSRFKRAQGHNVLHPMGWDAFGLPAEQYAMDTGNDPAEFTAENIANFKRQINALGFSYDWDREVNTTDPNYYKWTQWIFTELYEKGLAYEAEVPVNWVEELGTAIANEEVLPDGTSERGGYPVVRKPMRQWMLKITAYAERLLEDLEEVDWPESIKDMQRNWIGKSTGANVTFKVKDTDKDFTVFTTRPDTLFGATYAVLAPEHALVDAITTADQAEAVADYKRQASLKSDLARTDLAKEKTGVWTGSYAINPVNGNEMPVWIADYVLASYGTGAIMAVPAHDERDWEFAKQFNLDIIPVLEGGNVEEAAFTEDGLHINSDFLDGLDKASAIAKMVEWLEAEGVGNEKVTYRLRDWLFSRQRYWGEPIPIIHWEDGTSTAVPESELPLVLPVTKDIRPSGTGESPLANVTDWLEVTREDGVKGRRETNTMPQWAGSSWYYLRYIDPHNTEKLADEELLKQWLPVDIYVGGAEHAVLHLLYARFWHKVLYDLGVVPTKEPFQKLFNQGMILGTSYRDSRGALVATDKVEKRDGSFFHVETGEELEQAPAKMSKSLKNVVNPDDVVEQYGADTLRVYEMFMGPLDASIAWSEEGLEGSRKFLDRVYRLITTKEITEENSGALDKVYNETVKAVTEQVDQMKFNTAIAQLMVFVNAANKEDKLFSDYAKGFVQLIAPFAPHLGEELWQALTASGESISYVPWPSYDKSKLVENDVEIVVQIKGKVKAKLVVAKDLSREELQEVALANEKVQAEIAGKDIIKVIAVPNKLVNIVIK.

The 'HIGH' region motif lies at 41–52; it reads PYPSGAGLHVGH. Residues 610–614 carry the 'KMSKS' region motif; sequence KMSKS. ATP is bound at residue lysine 613.

This sequence belongs to the class-I aminoacyl-tRNA synthetase family.

The protein localises to the cytoplasm. It catalyses the reaction tRNA(Leu) + L-leucine + ATP = L-leucyl-tRNA(Leu) + AMP + diphosphate. The polypeptide is Leucine--tRNA ligase (Streptococcus pyogenes serotype M49 (strain NZ131)).